The following is a 1005-amino-acid chain: Vacuolar membrane protease (1005 aa).

At Met1–Gln14 the chain is on the cytoplasmic side. Residues Thr15–Val35 traverse the membrane as a helical segment. Topologically, residues Ser36–Lys353 are vacuolar. Asn107 carries N-linked (GlcNAc...) asparagine glycosylation. Residues His152 and Asp164 each coordinate Zn(2+). The active-site Proton acceptor is the Glu196. Residue Glu197 coordinates Zn(2+). N-linked (GlcNAc...) asparagine glycosylation occurs at Asn213. Zn(2+) contacts are provided by Glu222 and His311. Residues Pro354–Leu374 form a helical membrane-spanning segment. The Cytoplasmic segment spans residues Lys375–Phe448. The disordered stretch occupies residues Gly379–Ala420. Polar residues predominate over residues Ser406 to Asp419. The helical transmembrane segment at Trp449 to Ile469 threads the bilayer. Residues Asn470–Tyr479 lie on the Vacuolar side of the membrane. A helical transmembrane segment spans residues Phe480 to Ala500. At Phe501–Thr519 the chain is on the cytoplasmic side. Residues Ile520–Gly540 traverse the membrane as a helical segment. The Vacuolar portion of the chain corresponds to Lys541 to Gln543. The helical transmembrane segment at Val544–Gly564 threads the bilayer. The Cytoplasmic portion of the chain corresponds to Thr565–Asp644. The disordered stretch occupies residues Asp577–Lys640. A compositionally biased stretch (low complexity) spans Ser588 to Asp606. A helical transmembrane segment spans residues Gly645–Val665. The Vacuolar segment spans residues Gly666 to Ala686. Asn677 carries an N-linked (GlcNAc...) asparagine glycan. The chain crosses the membrane as a helical span at residues Trp687–Phe707. Residues Ser708–Arg713 lie on the Cytoplasmic side of the membrane. The helical transmembrane segment at Gly714–Phe734 threads the bilayer. Over Pro735–Val1005 the chain is Vacuolar. Residues Asn761 and Asn961 are each glycosylated (N-linked (GlcNAc...) asparagine).

Belongs to the peptidase M28 family. Zn(2+) is required as a cofactor.

It localises to the vacuole membrane. May be involved in vacuolar sorting and osmoregulation. The chain is Vacuolar membrane protease from Coprinopsis cinerea (strain Okayama-7 / 130 / ATCC MYA-4618 / FGSC 9003) (Inky cap fungus).